We begin with the raw amino-acid sequence, 506 residues long: Methylthioalkylmalate synthase 2, chloroplastic (506 aa).

The N-terminal 49 residues, 1-49, are a transit peptide targeting the chloroplast; the sequence is MASSLLTSSGMIPTTGSTVVGRSVLPFQSSLHSLRLTHSYKNPALFISC. A Pyruvate carboxyltransferase domain is found at 85–359; that stretch reads VRVFDTTLRD…YTRIDTRQIM (275 aa).

Belongs to the alpha-IPM synthase/homocitrate synthase family.

It localises to the plastid. The protein localises to the chloroplast. It carries out the reaction an omega-(methylsulfanyl)-2-oxoalkanoate + acetyl-CoA + H2O = a 2-(omega-methylsulfanyl)alkylmalate + CoA + H(+). Catalyzes only the first methionine chain elongation cycle. The chain is Methylthioalkylmalate synthase 2, chloroplastic (MAM2) from Arabidopsis thaliana (Mouse-ear cress).